The following is a 209-amino-acid chain: Glycine cleavage system H-like protein gcvH4 (209 aa).

Residues 35-51 (NNNNNNNNNNNNNNNNN) are compositionally biased toward low complexity. The disordered stretch occupies residues 35–56 (NNNNNNNNNNNNNNNNNRNKKL). The Lipoyl-binding domain maps to 73-159 (FATIGITNYV…KTTTTTTKIK (87 aa)).

It belongs to the GcvH family.

The polypeptide is Glycine cleavage system H-like protein gcvH4 (gcvH4) (Dictyostelium discoideum (Social amoeba)).